The chain runs to 110 residues: Nucleoid-associated protein Tola_2216 (110 aa).

The protein belongs to the YbaB/EbfC family. In terms of assembly, homodimer.

Its subcellular location is the cytoplasm. It localises to the nucleoid. Its function is as follows. Binds to DNA and alters its conformation. May be involved in regulation of gene expression, nucleoid organization and DNA protection. This chain is Nucleoid-associated protein Tola_2216, found in Tolumonas auensis (strain DSM 9187 / NBRC 110442 / TA 4).